Consider the following 440-residue polypeptide: Cytochrome c biogenesis protein Ccs1 (440 aa).

A run of 3 helical transmembrane segments spans residues 25–45 (LQFS…GTVI), 84–104 (TWWF…CSIS), and 170–190 (LAPI…VLGL).

The protein belongs to the Ccs1/CcsB family. In terms of assembly, may interact with CcsA.

Its subcellular location is the plastid. It is found in the chloroplast thylakoid membrane. Functionally, required during biogenesis of c-type cytochromes (cytochrome c6 and cytochrome f) at the step of heme attachment. This chain is Cytochrome c biogenesis protein Ccs1, found in Pyropia yezoensis (Susabi-nori).